The following is a 205-amino-acid chain: SREBP regulating gene protein (205 aa).

Topologically, residues 1–16 (MVNLAAMVWRRLLRKR) are cytoplasmic. The chain crosses the membrane as a helical span at residues 17–35 (WVLALVFGLSLVYFLTSTF). The Lumenal portion of the chain corresponds to 36 to 205 (KQEERAVRDR…GESPPELFPA (170 aa)). A glycan (N-linked (GlcNAc...) asparagine) is linked at Asn-67.

It belongs to the SPRING family. Interacts with SCAP.

It is found in the golgi apparatus membrane. Positively regulates hepatic SREBP signaling pathway by modulating the proper localization of SCAP (SREBP cleavage-activating protein) to the endoplasmic reticulum, thereby controlling the level of functional SCAP. This chain is SREBP regulating gene protein, found in Bos taurus (Bovine).